A 222-amino-acid polypeptide reads, in one-letter code: Small ribosomal subunit protein uS7m (222 aa).

Residues 1-14 constitute a mitochondrion transit peptide; sequence MTTKLARFAQKRWI.

Belongs to the universal ribosomal protein uS7 family. Component of the mitochondrial ribosome small subunit (28S) which comprises a 12S rRNA and about 30 distinct proteins.

The protein localises to the mitochondrion. In Caenorhabditis elegans, this protein is Small ribosomal subunit protein uS7m (mrps-7).